The following is a 108-amino-acid chain: MTTSSYFLLVALGLLLYVCQSSFGSPHTSDSGTTLVRRRLCGSELVTYLGELCLGNRKRRGFPSMLKARAKRNEAFLLQRDGRGIVEDCCYNDCTDEKLKEYCHTLQG.

Positions 1-24 are cleaved as a signal peptide; that stretch reads MTTSSYFLLVALGLLLYVCQSSFG. Residues 25-28 constitute a propeptide that is removed on maturation; the sequence is SPHT. 3 disulfide bridges follow: Cys41–Cys90, Cys53–Cys103, and Cys89–Cys94. Glu44 bears the 4-carboxyglutamate mark. Residues 57–83 constitute a propeptide, c peptide; the sequence is RKRRGFPSMLKARAKRNEAFLLQRDGR. Glu87 carries the 4-carboxyglutamate modification. Gln107 is modified (glutamine amide).

This sequence belongs to the insulin family. As to quaternary structure, heterodimer of A and B chains; disulfide-linked. As to expression, expressed by the venom gland.

The protein resides in the secreted. In terms of biological role, this venom insulin, from a fish-hunting cone snail, facilitates prey capture by rapidly inducing hypoglycemic shock. It is one of the smallest known insulin found in nature and lacks the C-terminal segment of the B chain that, in human insulin, mediates engagement of the insulin receptor (INSR) and assembly of the hormone's hexameric storage form. Despite lacking this segment, it both binds and activates human insulin receptor (long isoform (HIR-B)) with a moderate potency (EC(50)=30.45 nM). In vivo, intraperitoneal injection of this peptide into zebrafish lowers blood glucose with a lower potency than human insulin. In addition, when applied to water, this peptide reduces overall locomotor activity of zebrafish larvae, observed as a significant decrease in the percentage of time spent swimming and movement frequency. When tested on a mouse model of diabetes, this insulin also lowers blood glucose with a 20-fold lower potency than human insulin. This is Con-Ins K1 from Conus kinoshitai (Kinoshita's cone).